Reading from the N-terminus, the 220-residue chain is Casparian strip membrane protein 4 (220 aa).

The disordered stretch occupies residues 1 to 39; it reads MDSRREVEESSTAPILESKRTRSNGKGKSIDGDHSPPHA. Residues 1 to 60 are Cytoplasmic-facing; it reads MDSRREVEESSTAPILESKRTRSNGKGKSIDGDHSPPHAATVVTTKATPLQKGGMKKGIA. The chain crosses the membrane as a helical span at residues 61 to 81; that stretch reads ILDFILRLGAIGAALGAAVIM. Residues 82–108 are Extracellular-facing; it reads GTNEQILPFFTQFLQFHAQWDDFPMFK. The helical transmembrane segment at 109–129 threads the bilayer; the sequence is FFVVANGAAAGFLILSLPFSI. Residues 130-141 lie on the Cytoplasmic side of the membrane; that stretch reads VCIVRPLAAGPR. The helical transmembrane segment at 142–162 threads the bilayer; it reads FLLVIVDLVLMALVVAAASSA. Residues 163–194 are Extracellular-facing; sequence AAVVYLAHNGSQDANWNAICQQFTDFCQGSSL. The N-linked (GlcNAc...) asparagine glycan is linked to Asn-171. A helical transmembrane segment spans residues 195–215; the sequence is AVVASFVASVFLACLVVVSSV. Residues 216 to 220 lie on the Cytoplasmic side of the membrane; that stretch reads ALKRT.

The protein belongs to the Casparian strip membrane proteins (CASP) family. In terms of assembly, homodimer and heterodimers.

It localises to the cell membrane. Functionally, regulates membrane-cell wall junctions and localized cell wall deposition. Required for establishment of the Casparian strip membrane domain (CSD) and the subsequent formation of Casparian strips, a cell wall modification of the root endodermis that determines an apoplastic barrier between the intraorganismal apoplasm and the extraorganismal apoplasm and prevents lateral diffusion. This chain is Casparian strip membrane protein 4, found in Medicago truncatula (Barrel medic).